The chain runs to 1091 residues: MAAGCLLALTLTLFQSWLIGPSSEEPFPSPVTIKSWVDKMQEDLVTLAKTASGVTQLADIYEKYQDLYTVEPNNARQLVEIAARDIEKLLSNRSKALVRLAMEAEKVQAAHQWREDFASNEVVYYNAKDDLDPERNESESGSQRIKPVFIEDANFGRQISYQHAAVHIPTDIYEGSTIVLNELNWTSALDEVFKRNRDEDPTLLWQVFAADRLARYYPASPWVDNSRTPNKIDLYDVRRRPWYIQGAASPKDMLILVDVSGSVSGLTLKLIRTSVSEMLETLSDDDFVNVASFNSNAQDVSCFQHLVQANVRNKKVLKDAVNNITAKGITDYKKGFTFAFEQLLNYNVSRANCNKIIMLFTDGGEERAQEIFAKYNKDKKVRVFTFSVGQHNYDRGPIQWMACENKGYYYEIPSIGAIRINTQEYLDVLGRPMVLAGDKAKQVQWTNVYLDALELGLVITGTLPVFNVTGQSENKTNLKNQLILGVMGVDVSLEDIKRLTPRFTLCPNGYYFAIDPNGYVLLHPNLQPKNPKSQEPVTLDFLDAELENDIKVEIRNKMIDGESGEKTFRTLVKSQDERYIDKGNRTYTWTPVNGTDYRYLALVLPTYSFYYIKAKIEETITQARSKKGKMKDSETLKPDNFEESGYTFIAPREYCNDLKPSDNNTEFLLNFNEFIDRKTPNNPSCNTDLINRILLDAGFTNELVQNYWSKQKNIKGVKARFVVTDGGITRVYPKEAGENWQENPETYEDSFYKRSLDNDNYVFTAPYFNKSGPGAYESGIMVSKAVELYIQGKLLKPAVVGIKIDVNSWIENFTKTSIRDPCAGPVCDCKRNSDVMDCVILDDGGFLLMANHDDYTNQIGRFFGEIDPRMMRHLVNISLYAFNKSYDYQSVCDPGAAPKQGAGHRSAYVPSITDILQIGWWATAAAWSILQQLLLSLTFPRLLEAVEMEEDDFTASLSKQSCITEQTQYFFKNDTKSFSGLLDCGNCSRIFHVEKLMNTNLVFIMVESKGTCPCDTRLLMQAEQTSDGPDPCDMVKQPRYRKGPDVCFDNNVLEDYTDCGGVSGLNPSLWSIFGLQFILLWLVSGSRHYLW.

Residues 1–24 form the signal peptide; sequence MAAGCLLALTLTLFQSWLIGPSSE. Over 25–1061 the chain is Extracellular; the sequence is EPFPSPVTIK…VLEDYTDCGG (1037 aa). Asn92 carries N-linked (GlcNAc...) asparagine glycosylation. Ser119 bears the Phosphoserine mark. Residues Asn136 and Asn184 are each glycosylated (N-linked (GlcNAc...) asparagine). In terms of domain architecture, VWFA spans 252–429; sequence DMLILVDVSG…INTQEYLDVL (178 aa). The a divalent metal cation site is built by Asp258, Ser260, and Ser262. Positions 258 to 262 match the MIDAS-like motif motif; that stretch reads DVSGS. Asn323 and Asn347 each carry an N-linked (GlcNAc...) asparagine glycan. Cys403 and Cys1047 form a disulfide bridge. One can recognise a Cache domain in the interval 445 to 536; sequence WTNVYLDALE…QPKNPKSQEP (92 aa). N-linked (GlcNAc...) asparagine glycans are attached at residues Asn593, Asn769, Asn876, and Asn973. The helical transmembrane segment at 1062–1082 threads the bilayer; that stretch reads VSGLNPSLWSIFGLQFILLWL. Topologically, residues 1083–1091 are cytoplasmic; that stretch reads VSGSRHYLW.

The protein belongs to the calcium channel subunit alpha-2/delta family. In terms of assembly, dimer formed of alpha-2-1 and delta-1 chains; disulfide-linked. Voltage-dependent calcium channels are multisubunit complexes, consisting of alpha-1 (CACNA1), alpha-2 (CACNA2D), beta (CACNB) and delta (CACNA2D) subunits in a 1:1:1:1 ratio. In terms of processing, proteolytically processed into subunits alpha-2-1 and delta-1 that are disulfide-linked.

It localises to the membrane. The protein localises to the cell membrane. Functionally, the alpha-2/delta subunit of voltage-dependent calcium channels regulates calcium current density and activation/inactivation kinetics of the calcium channel. Plays an important role in excitation-contraction coupling. The chain is Voltage-dependent calcium channel subunit alpha-2/delta-1 (Cacna2d1) from Rattus norvegicus (Rat).